The primary structure comprises 316 residues: Probable cell division protein WhiA (316 aa).

A DNA-binding region (H-T-H motif) is located at residues 275-309 (TLKELGEMVSSGKISKSGINHRLRKLDEIAEQLRS).

The protein belongs to the WhiA family.

In terms of biological role, involved in cell division and chromosome segregation. This Bacillus licheniformis (strain ATCC 14580 / DSM 13 / JCM 2505 / CCUG 7422 / NBRC 12200 / NCIMB 9375 / NCTC 10341 / NRRL NRS-1264 / Gibson 46) protein is Probable cell division protein WhiA.